The following is a 733-amino-acid chain: Centrosomal protein of 68 kDa (733 aa).

The segment covering 71 to 80 (SKEPVADRSK) has biased composition (basic and acidic residues). Disordered regions lie at residues 71–92 (SKEPVADRSKPPLRGPLPSASV), 150–207 (GLSQ…SFAN), and 222–244 (VVGAGPPLQGSAQPLTSGSDATG). Low complexity predominate over residues 178 to 190 (SSRSISASSVGSS). Over residues 231–241 (GSAQPLTSGSD) the composition is skewed to polar residues. At Ser315 the chain carries Phosphoserine. Residues 420–442 (PQLKTKEKEPPFPRQKRGRQHVS) form a disordered region. 2 positions are modified to phosphoserine: Ser453 and Ser459. Positions 497 to 571 (HSSLQVSDSD…KPLKTQPASK (75 aa)) are disordered. Over residues 540-569 (IQPQDSRGKSSLMSNQTLGVSSKPLKTQPA) the composition is skewed to polar residues.

Interacts with CNTLN; the interaction recruits CEP68 to the centrosome. Interacts with the SCF(FBXW11) complex which contains SKP1, CUL1 and FBXW11; the interaction is probably mediated by FBXW11 and the complex also contains CDK5RAP2 and PCNT. Also interacts with F-box protein BTRC. Interacts with serine/threonine-protein kinase PLK1; the interaction leads to phosphorylation of CEP68 and its subsequent degradation. Interacts with NEK2; the interaction leads to phosphorylation of CEP68. In terms of processing, phosphorylation by PLK1 is required for binding to BTRC in prometaphase. Phosphorylated directly or indirectly by NEK2. NEK2-mediated phosphorylation promotes CEP68 dissociation from the centrosome and its degradation at the onset of mitosis. Post-translationally, ubiquitinated and targeted for proteasomal degradation in early mitosis by the SCF(BTRC) and/or SCF(FBXW11) E3 ubiquitin-protein ligase complexes. Degradation is complete by prometaphase and is required for removal of CDK5RAP2 from the peripheral pericentriolar material and subsequent centriole separation.

The protein localises to the cytoplasm. It localises to the cytoskeleton. The protein resides in the microtubule organizing center. It is found in the centrosome. Involved in maintenance of centrosome cohesion, probably as part of a linker structure which prevents centrosome splitting. Required for localization of CDK5RAP2 to the centrosome during interphase. Contributes to CROCC/rootletin filament formation. The protein is Centrosomal protein of 68 kDa (Cep68) of Mus musculus (Mouse).